The chain runs to 152 residues: Small ribosomal subunit protein uS15 (152 aa).

Over residues 1–10 (MARMYARRRG) the composition is skewed to basic residues. A disordered region spans residues 1 to 24 (MARMYARRRGTSSSVRPYRKEAPE).

This sequence belongs to the universal ribosomal protein uS15 family. As to quaternary structure, part of the 30S ribosomal subunit.

This is Small ribosomal subunit protein uS15 from Methanoculleus marisnigri (strain ATCC 35101 / DSM 1498 / JR1).